A 303-amino-acid polypeptide reads, in one-letter code: Bifunctional protein FolD (303 aa).

NADP(+)-binding positions include 175–177 (GVS) and Ile243.

This sequence belongs to the tetrahydrofolate dehydrogenase/cyclohydrolase family. In terms of assembly, homodimer.

It catalyses the reaction (6R)-5,10-methylene-5,6,7,8-tetrahydrofolate + NADP(+) = (6R)-5,10-methenyltetrahydrofolate + NADPH. The enzyme catalyses (6R)-5,10-methenyltetrahydrofolate + H2O = (6R)-10-formyltetrahydrofolate + H(+). It functions in the pathway one-carbon metabolism; tetrahydrofolate interconversion. Functionally, catalyzes the oxidation of 5,10-methylenetetrahydrofolate to 5,10-methenyltetrahydrofolate and then the hydrolysis of 5,10-methenyltetrahydrofolate to 10-formyltetrahydrofolate. The chain is Bifunctional protein FolD from Xanthomonas euvesicatoria pv. vesicatoria (strain 85-10) (Xanthomonas campestris pv. vesicatoria).